The primary structure comprises 248 residues: Probable transcriptional regulatory protein Plav_2114 (248 aa).

Belongs to the TACO1 family.

It localises to the cytoplasm. This is Probable transcriptional regulatory protein Plav_2114 from Parvibaculum lavamentivorans (strain DS-1 / DSM 13023 / NCIMB 13966).